We begin with the raw amino-acid sequence, 361 residues long: Putative F-box protein At3g18340 (361 aa).

The 46-residue stretch at 1–46 (MASGKLPWELEEEILCRLPPGSLVRLRSVCKHWNDLYNDKWFIKKS) folds into the F-box domain.

This Arabidopsis thaliana (Mouse-ear cress) protein is Putative F-box protein At3g18340.